The chain runs to 159 residues: Major allergen Pyr c 1 (159 aa).

This sequence belongs to the BetVI family.

In Pyrus communis (Pear), this protein is Major allergen Pyr c 1 (PYRC1).